A 188-amino-acid polypeptide reads, in one-letter code: uncharacterized protein (188 aa).

Residues 1-18 (MTLRIIAHLLALTASLAG) form the signal peptide. Cys-19 is lipidated: N-palmitoyl cysteine. Cys-19 is lipidated: S-diacylglycerol cysteine.

It localises to the cell membrane. This is an uncharacterized protein from Sinorhizobium fredii (strain NBRC 101917 / NGR234).